An 828-amino-acid polypeptide reads, in one-letter code: Periplasmic nitrate reductase (828 aa).

The tat-type signal signal peptide spans Met-1–Ala-31. The 4Fe-4S Mo/W bis-MGD-type domain occupies Ile-39–Asp-95. Residues Cys-46, Cys-49, Cys-53, and Cys-81 each contribute to the [4Fe-4S] cluster site. Residues Lys-83, Gln-150, Asn-175, Cys-179, Trp-212 to Met-219, Ser-243 to His-247, Gln-262 to Asp-264, Met-372, Gln-376, Asn-482, Ser-508 to Asp-509, Lys-531, Asp-558, and Thr-718 to Thr-727 contribute to the Mo-bis(molybdopterin guanine dinucleotide) site. Substrate is bound at residue Phe-794. Asn-802 and Lys-819 together coordinate Mo-bis(molybdopterin guanine dinucleotide).

The protein belongs to the prokaryotic molybdopterin-containing oxidoreductase family. NasA/NapA/NarB subfamily. Component of the periplasmic nitrate reductase NapAB complex composed of NapA and NapB. The cofactor is [4Fe-4S] cluster. Mo-bis(molybdopterin guanine dinucleotide) serves as cofactor. Predicted to be exported by the Tat system. The position of the signal peptide cleavage has not been experimentally proven.

The protein localises to the periplasm. The catalysed reaction is 2 Fe(II)-[cytochrome] + nitrate + 2 H(+) = 2 Fe(III)-[cytochrome] + nitrite + H2O. In terms of biological role, catalytic subunit of the periplasmic nitrate reductase complex NapAB. Receives electrons from NapB and catalyzes the reduction of nitrate to nitrite. The polypeptide is Periplasmic nitrate reductase (Shigella flexneri serotype 5b (strain 8401)).